The following is a 341-amino-acid chain: MADEKPSNGVLVHMVKLLIKTFLDGIFDDLMENNVLNTDEIHLIGKCLKFVVSNAENLVDDITETAQIAGKIFREHLWNSKKQLSSDISSDGEREANMPGLNIRNKEFNYLHNRNGSELDLLGMRDLLENLGYSVVIKENLTAQEMETALRQFAAHPEHQSSDSTFLVFMSHSILNGICGTKHWDQEPDVLHDDTIFEIFNNRNCQSLKDKPKVIIMQACRGNGAGIVWFTTDSGKASADTHGRLLQGNICNDAVTKAHVEKDFIAFKSSTPHNVSWRHETNGSVFISQIIYYFREYSWSHHLEEIFQKVQHSFETPNILTQLPTIERLSMTRYFYLFPGN.

Positions 1–92 (MADEKPSNGV…QLSSDISSDG (92 aa)) constitute a CARD domain. A phosphoserine mark is found at Ser85 and Ser90. Active-site residues include His172 and Cys220.

The protein belongs to the peptidase C14A family. As to expression, widely expressed, with highest levels in lung.

Functionally, may function as a negative regulator of inflammatory responses and innate immunity. May reduce cytokine release in response to bacterial lipopolysaccharide during infection. Reduces activation of NF-kappa-B in response to TNF. May lack protease activity. The protein is Inactive caspase-12 (CASP12) of Homo sapiens (Human).